A 353-amino-acid polypeptide reads, in one-letter code: Protein RecA (353 aa).

Residue 75 to 82 (GPESSGKT) coordinates ATP.

The protein belongs to the RecA family.

The protein resides in the cytoplasm. Can catalyze the hydrolysis of ATP in the presence of single-stranded DNA, the ATP-dependent uptake of single-stranded DNA by duplex DNA, and the ATP-dependent hybridization of homologous single-stranded DNAs. It interacts with LexA causing its activation and leading to its autocatalytic cleavage. This is Protein RecA from Cupriavidus necator (Alcaligenes eutrophus).